Here is a 371-residue protein sequence, read N- to C-terminus: Succinyl-diaminopimelate desuccinylase (371 aa).

H68 serves as a coordination point for Zn(2+). D70 is a catalytic residue. Residue D99 coordinates Zn(2+). E130 functions as the Proton acceptor in the catalytic mechanism. Zn(2+)-binding residues include E131, E159, and H344.

Belongs to the peptidase M20A family. DapE subfamily. In terms of assembly, homodimer. Zn(2+) serves as cofactor. Requires Co(2+) as cofactor.

The enzyme catalyses N-succinyl-(2S,6S)-2,6-diaminopimelate + H2O = (2S,6S)-2,6-diaminopimelate + succinate. Its pathway is amino-acid biosynthesis; L-lysine biosynthesis via DAP pathway; LL-2,6-diaminopimelate from (S)-tetrahydrodipicolinate (succinylase route): step 3/3. Catalyzes the hydrolysis of N-succinyl-L,L-diaminopimelic acid (SDAP), forming succinate and LL-2,6-diaminopimelate (DAP), an intermediate involved in the bacterial biosynthesis of lysine and meso-diaminopimelic acid, an essential component of bacterial cell walls. The chain is Succinyl-diaminopimelate desuccinylase from Acidiphilium cryptum (strain JF-5).